A 584-amino-acid chain; its full sequence is A-type ATP synthase subunit A (584 aa).

233–240 (GPFGSGKT) is a binding site for ATP.

The protein belongs to the ATPase alpha/beta chains family. As to quaternary structure, has multiple subunits with at least A(3), B(3), C, D, E, F, H, I and proteolipid K(x).

The protein localises to the cell membrane. It catalyses the reaction ATP + H2O + 4 H(+)(in) = ADP + phosphate + 5 H(+)(out). Component of the A-type ATP synthase that produces ATP from ADP in the presence of a proton gradient across the membrane. The A chain is the catalytic subunit. The protein is A-type ATP synthase subunit A of Methanobrevibacter smithii (strain ATCC 35061 / DSM 861 / OCM 144 / PS).